A 430-amino-acid polypeptide reads, in one-letter code: MFVDQVTISLKAGDGGNGITAYRREKYVPFGGPAGGDGGKGASVVFEVDEGLRTLLDFRYQRHFKAKKGENGQSSNMHGRGADDLVLKVPPGTIIKSVETDEVLADLVEDGQRAVVARGGRGGRGNSRFATPRNPAPDFSENGEPGEELDVTLELKLLADVGLVGFPSVGKSTLLSIVSKAKPKIGAYHFTTIKPNLGVVSTPDNRSFVMADLPGLIEGASDGVGLGHQFLRHVERTKVIVHMIDMSGSEGRDPFDDYQIINKELVNYKQRLEDRPQIVVANKMDMPDAQDNLTLFKEQVDDSVTIIPVSTITRDNIEQLLYAIADKLDEVKDIDFSVDNDEEIGVNRVLYKHTPSQDKFTITRDDDGAYVVSGNAIERMFKMTDFNSDPAVRRFARQMRSMGIDDALRERGCSNGDIVRILGGEFEFVE.

Residues 1–158 (MFVDQVTISL…LDVTLELKLL (158 aa)) enclose the Obg domain. The tract at residues 118 to 145 (RGGRGGRGNSRFATPRNPAPDFSENGEP) is disordered. Positions 159 to 329 (ADVGLVGFPS…LLYAIADKLD (171 aa)) constitute an OBG-type G domain. GTP is bound by residues 165-172 (GFPSVGKS), 190-194 (FTTIK), 212-215 (DLPG), 282-285 (NKMD), and 310-312 (STI). S172 and T192 together coordinate Mg(2+). The 79-residue stretch at 352–430 (KHTPSQDKFT…ILGGEFEFVE (79 aa)) folds into the OCT domain.

Belongs to the TRAFAC class OBG-HflX-like GTPase superfamily. OBG GTPase family. In terms of assembly, monomer. The cofactor is Mg(2+).

Its subcellular location is the cytoplasm. Its function is as follows. An essential GTPase which binds GTP, GDP and possibly (p)ppGpp with moderate affinity, with high nucleotide exchange rates and a fairly low GTP hydrolysis rate. Plays a role in control of the cell cycle, stress response, ribosome biogenesis and in those bacteria that undergo differentiation, in morphogenesis control. This chain is GTPase Obg, found in Staphylococcus haemolyticus (strain JCSC1435).